A 222-amino-acid polypeptide reads, in one-letter code: ATP-dependent dethiobiotin synthetase BioD (222 aa).

An ATP-binding site is contributed by 12–17; sequence DAGKTV. Residue Thr16 participates in Mg(2+) binding. Lys37 is a catalytic residue. Substrate is bound at residue Ser41. Residues Asp54, 116–119, 176–177, 206–208, and Glu213 contribute to the ATP site; these read EGAG, VQ, and PYL. Residues Asp54 and Glu116 each coordinate Mg(2+).

The protein belongs to the dethiobiotin synthetase family. Homodimer. Requires Mg(2+) as cofactor.

Its subcellular location is the cytoplasm. It carries out the reaction (7R,8S)-7,8-diammoniononanoate + CO2 + ATP = (4R,5S)-dethiobiotin + ADP + phosphate + 3 H(+). Its pathway is cofactor biosynthesis; biotin biosynthesis; biotin from 7,8-diaminononanoate: step 1/2. Catalyzes a mechanistically unusual reaction, the ATP-dependent insertion of CO2 between the N7 and N8 nitrogen atoms of 7,8-diaminopelargonic acid (DAPA, also called 7,8-diammoniononanoate) to form a ureido ring. The chain is ATP-dependent dethiobiotin synthetase BioD from Idiomarina loihiensis (strain ATCC BAA-735 / DSM 15497 / L2-TR).